The sequence spans 105 residues: Small ribosomal subunit protein uS10 (105 aa).

It belongs to the universal ribosomal protein uS10 family. In terms of assembly, part of the 30S ribosomal subunit.

In terms of biological role, involved in the binding of tRNA to the ribosomes. The sequence is that of Small ribosomal subunit protein uS10 from Rickettsia massiliae (strain Mtu5).